Consider the following 307-residue polypeptide: Serine/threonine-protein phosphatase 4 catalytic subunit (307 aa).

4 residues coordinate Mn(2+): aspartate 54, histidine 56, aspartate 82, and asparagine 114. Residue histidine 115 is the Proton donor of the active site. 2 residues coordinate Mn(2+): histidine 164 and histidine 238. Leucine 307 is subject to Leucine methyl ester.

It belongs to the PPP phosphatase family. PP-4 (PP-X) subfamily. As to quaternary structure, serine/threonine-protein phosphatase 4 (PP4) occurs in different assemblies of the catalytic and one or more regulatory subunits. Mn(2+) is required as a cofactor.

It is found in the cytoplasm. The protein localises to the nucleus. Its subcellular location is the cytoskeleton. The protein resides in the microtubule organizing center. It localises to the centrosome. It carries out the reaction O-phospho-L-seryl-[protein] + H2O = L-seryl-[protein] + phosphate. It catalyses the reaction O-phospho-L-threonyl-[protein] + H2O = L-threonyl-[protein] + phosphate. In terms of biological role, protein phosphatase that regulates many processes such as microtubule organization at centrosomes. This chain is Serine/threonine-protein phosphatase 4 catalytic subunit (ppp4c), found in Xenopus laevis (African clawed frog).